The primary structure comprises 375 residues: Proton-coupled zinc antiporter SLC30A8 (375 aa).

Topologically, residues 1–68 (MKGPEKAYLV…QREQTSAKKK (68 aa)) are cytoplasmic. Residues H46, C47, and H48 each coordinate Zn(2+). Residues 46 to 48 (HCH) carry the HCH Motif; seals regulatory zinc-binding pocket motif. The helical transmembrane segment at 69 to 89 (LCIASLICFVFISAEIVGGYI) threads the bilayer. The Lumenal, vesicle segment spans residues 90–98 (AGSLAVVTD). Residues 99 to 119 (AAHLLVDLSSFFISLGSLWLS) traverse the membrane as a helical segment. Zn(2+) contacts are provided by H101 and D105. At 120–135 (SKSSTMRLTFGWYRAE) the chain is on the cytoplasmic side. Residues 136–156 (ILGALMSIITIWLVTGVLVYL) traverse the membrane as a helical segment. Residues 157–170 (AIERIIRPDYTIDG) are Lumenal, vesicle-facing. A helical membrane pass occupies residues 171 to 191 (TVMLITSACALGANVVLALIL). Residues 192–223 (HQSGHGHSHAGGKHEHMASEYKPQTNASIRAA) are Cytoplasmic-facing. A helical membrane pass occupies residues 224 to 244 (FIHVIGDLFQSISVLISALII). 2 residues coordinate Zn(2+): H226 and D230. Topologically, residues 245-251 (YFKPEYK) are lumenal, vesicle. The chain crosses the membrane as a helical span at residues 252-272 (IADPICTFIFSIFVLITTVTV). Residues 273-375 (LRDLLNILME…ECMFCYEPTQ (103 aa)) are Cytoplasmic-facing. Zn(2+) is bound by residues H307, H324, H351, E358, C367, and C370.

Belongs to the cation diffusion facilitator (CDF) transporter (TC 2.A.4) family. SLC30A subfamily. In terms of assembly, homodimer.

The protein resides in the cytoplasmic vesicle. It is found in the secretory vesicle membrane. The protein localises to the cell membrane. It carries out the reaction Zn(2+)(in) + 2 H(+)(out) = Zn(2+)(out) + 2 H(+)(in). In terms of biological role, proton-coupled zinc ion antiporter mediating the entry of zinc into the lumen of pancreatic beta cell secretory granules, thereby regulating insulin secretion. The sequence is that of Proton-coupled zinc antiporter SLC30A8 (slc30a8) from Xenopus laevis (African clawed frog).